Reading from the N-terminus, the 271-residue chain is Coiled-coil domain-containing protein ORF29 (271 aa).

The segment at 1–39 (MNEKTESEIFEEQNSLYKPIKQEKKTPSTPESEDKNDQS) is disordered. Residues 20–37 (IKQEKKTPSTPESEDKND) show a composition bias toward basic and acidic residues. The stretch at 208-228 (RATQTQEILLNSLRKNLQMLE) forms a coiled coil.

The sequence is that of Coiled-coil domain-containing protein ORF29 from Helicobacter pylori (strain 35A).